A 122-amino-acid polypeptide reads, in one-letter code: Ribonuclease P protein component (122 aa).

It belongs to the RnpA family. Consists of a catalytic RNA component (M1 or rnpB) and a protein subunit.

It catalyses the reaction Endonucleolytic cleavage of RNA, removing 5'-extranucleotides from tRNA precursor.. Functionally, RNaseP catalyzes the removal of the 5'-leader sequence from pre-tRNA to produce the mature 5'-terminus. It can also cleave other RNA substrates such as 4.5S RNA. The protein component plays an auxiliary but essential role in vivo by binding to the 5'-leader sequence and broadening the substrate specificity of the ribozyme. This is Ribonuclease P protein component from Shouchella clausii (strain KSM-K16) (Alkalihalobacillus clausii).